We begin with the raw amino-acid sequence, 86 residues long: Large ribosomal subunit protein bL27 (86 aa).

This sequence belongs to the bacterial ribosomal protein bL27 family.

This chain is Large ribosomal subunit protein bL27, found in Cupriavidus metallidurans (strain ATCC 43123 / DSM 2839 / NBRC 102507 / CH34) (Ralstonia metallidurans).